Consider the following 342-residue polypeptide: Probable endoglucanase (342 aa).

Positions 1 to 20 (MSVMAAMGGAQVLSSTGAFA) are cleaved as a signal peptide. Glu-57 serves as the catalytic Proton donor. The active-site Nucleophile is the Asp-114.

Belongs to the glycosyl hydrolase 8 (cellulase D) family.

It localises to the secreted. The catalysed reaction is Endohydrolysis of (1-&gt;4)-beta-D-glucosidic linkages in cellulose, lichenin and cereal beta-D-glucans.. Functionally, enzyme capable of hydrolyzing carboxy-methyl-cellulose (CMC). This Novacetimonas hansenii (Komagataeibacter hansenii) protein is Probable endoglucanase (cmcAX).